The chain runs to 666 residues: tRNA 5-methylaminomethyl-2-thiouridine biosynthesis bifunctional protein MnmC (666 aa).

Residues 1 to 245 (MKQYAIQPAT…KREMLCGVME (245 aa)) are tRNA (mnm(5)s(2)U34)-methyltransferase. Residues 270–666 (IGGGIASALL…RKLLKGKAVK (397 aa)) are FAD-dependent cmnm(5)s(2)U34 oxidoreductase.

In the N-terminal section; belongs to the methyltransferase superfamily. tRNA (mnm(5)s(2)U34)-methyltransferase family. This sequence in the C-terminal section; belongs to the DAO family. Requires FAD as cofactor.

It is found in the cytoplasm. The catalysed reaction is 5-aminomethyl-2-thiouridine(34) in tRNA + S-adenosyl-L-methionine = 5-methylaminomethyl-2-thiouridine(34) in tRNA + S-adenosyl-L-homocysteine + H(+). In terms of biological role, catalyzes the last two steps in the biosynthesis of 5-methylaminomethyl-2-thiouridine (mnm(5)s(2)U) at the wobble position (U34) in tRNA. Catalyzes the FAD-dependent demodification of cmnm(5)s(2)U34 to nm(5)s(2)U34, followed by the transfer of a methyl group from S-adenosyl-L-methionine to nm(5)s(2)U34, to form mnm(5)s(2)U34. This Salmonella paratyphi B (strain ATCC BAA-1250 / SPB7) protein is tRNA 5-methylaminomethyl-2-thiouridine biosynthesis bifunctional protein MnmC.